The following is a 147-amino-acid chain: Hemoglobin subunit beta (147 aa).

One can recognise a Globin domain in the interval 3 to 147; sequence LLSAEENAHV…VANALAHKYH (145 aa). Threonine 13 carries the post-translational modification Phosphothreonine. Phosphoserine is present on serine 45. An N6-acetyllysine modification is found at lysine 60. Histidine 64 serves as a coordination point for heme b. Lysine 83 carries the post-translational modification N6-acetyllysine. Histidine 93 serves as a coordination point for heme b. Residue cysteine 94 is modified to S-nitrosocysteine. N6-acetyllysine is present on lysine 145.

The protein belongs to the globin family. Heterotetramer of two alpha chains and two beta chains. As to expression, red blood cells.

Its function is as follows. Involved in oxygen transport from the lung to the various peripheral tissues. The chain is Hemoglobin subunit beta (HBB) from Eulemur fulvus fulvus (Brown lemur).